The primary structure comprises 643 residues: ATP-dependent RNA helicase DeaD (643 aa).

Residues 6 to 34 carry the Q motif motif; the sequence is TTFADLGLKAPILEALTDLGYEKPSPIQA. Residues 37 to 208 enclose the Helicase ATP-binding domain; it reads IPHLLDGRDV…RRFMKEPQEV (172 aa). Residue 50-57 participates in ATP binding; that stretch reads AQTGSGKT. Residues 156–159 carry the DEAD box motif; sequence DEAD. Residues 232–379 enclose the Helicase C-terminal domain; that stretch reads KNEALVRFLE…EVELPNAELL (148 aa). Disordered regions lie at residues 440 to 482 and 557 to 643; these read VPPV…KRER and MNMQ…GGDA. Basic and acidic residues-rich tracts occupy residues 448–482 and 567–643; these read PRRE…KRER and PRTE…GGDA.

This sequence belongs to the DEAD box helicase family. DeaD/CsdA subfamily.

It localises to the cytoplasm. It carries out the reaction ATP + H2O = ADP + phosphate + H(+). DEAD-box RNA helicase involved in various cellular processes at low temperature, including ribosome biogenesis, mRNA degradation and translation initiation. The protein is ATP-dependent RNA helicase DeaD of Klebsiella pneumoniae.